The primary structure comprises 372 residues: MSMVVQQEQEVVFDAAVLSGQTEIPSQFIWPAEESPGSVAVEELEVALIDVGAGAERSSVVRQVGEACERHGFFLVVNHGIEAALLEEAHRCMDAFFTLPLGEKQRAQRRAGESCGYASSFTGRFASKLPWKETLSFRYSSAGDEEGEEGVGEYLVRKLGAEHGRRLGEVYSRYCHEMSRLSLELMEVLGESLGIVGDRRHYFRRFFQRNDSIMRLNYYPACQRPLDTLGTGPHCDPTSLTILHQDHVGGLEVWAEGRWRAIRPRPGALVVNVGDTFMALSNARYRSCLHRAVVNSTAPRRSLAFFLCPEMDTVVRPPEELVDDHHPRVYPDFTWRALLDFTQRHYRADMRTLQAFSDWLNHHRHLQPTIYS.

One can recognise a Fe2OG dioxygenase domain in the interval 209-309; the sequence is RNDSIMRLNY…RRSLAFFLCP (101 aa). Residues H234, D236, and H290 each coordinate Fe cation. R300 is a catalytic residue.

Belongs to the iron/ascorbate-dependent oxidoreductase family. GA20OX subfamily. The cofactor is Fe(2+). Requires L-ascorbate as cofactor. In terms of tissue distribution, preferentially expressed in reproductive organs. Expressed in the epithelium of embryos and the tapetum of anthers. Expressed at low levels in the shoot apical meristem.

The enzyme catalyses gibberellin A12 + 2 2-oxoglutarate + 3 O2 + H(+) = gibberellin A9 + 2 succinate + 3 CO2 + 2 H2O. It carries out the reaction gibberellin A53 + 2 2-oxoglutarate + 3 O2 + H(+) = gibberellin A20 + 2 succinate + 3 CO2 + 2 H2O. Functionally, key oxidase enzyme in the biosynthesis of gibberellin. Catalyzes the conversion of GA12 and GA53 to GA9 and GA20 respectively, via a three-step oxidation at C-20 of the GA skeleton. This chain is Gibberellin 20 oxidase 1, found in Oryza sativa subsp. japonica (Rice).